The sequence spans 197 residues: Holliday junction branch migration complex subunit RuvA (197 aa).

The segment at 1–64 is domain I; it reads MIGRLRGIVA…EDSVSLYGFL (64 aa). The segment at 65 to 143 is domain II; the sequence is REGERRLFRD…QFGAGGALPT (79 aa). A flexible linker region spans residues 144 to 153; that stretch reads GSGPAPADPL. Residues 153 to 197 form a domain III region; it reads LSDATVALQQLGYKPAEAARMAREAFNEGDEVAIVIRKALQSALR.

The protein belongs to the RuvA family. As to quaternary structure, homotetramer. Forms an RuvA(8)-RuvB(12)-Holliday junction (HJ) complex. HJ DNA is sandwiched between 2 RuvA tetramers; dsDNA enters through RuvA and exits via RuvB. An RuvB hexamer assembles on each DNA strand where it exits the tetramer. Each RuvB hexamer is contacted by two RuvA subunits (via domain III) on 2 adjacent RuvB subunits; this complex drives branch migration. In the full resolvosome a probable DNA-RuvA(4)-RuvB(12)-RuvC(2) complex forms which resolves the HJ.

It localises to the cytoplasm. Its function is as follows. The RuvA-RuvB-RuvC complex processes Holliday junction (HJ) DNA during genetic recombination and DNA repair, while the RuvA-RuvB complex plays an important role in the rescue of blocked DNA replication forks via replication fork reversal (RFR). RuvA specifically binds to HJ cruciform DNA, conferring on it an open structure. The RuvB hexamer acts as an ATP-dependent pump, pulling dsDNA into and through the RuvAB complex. HJ branch migration allows RuvC to scan DNA until it finds its consensus sequence, where it cleaves and resolves the cruciform DNA. The sequence is that of Holliday junction branch migration complex subunit RuvA from Stenotrophomonas maltophilia (strain R551-3).